A 1522-amino-acid chain; its full sequence is Sodium channel protein 1 brain (1522 aa).

The Cytoplasmic segment spans residues 1–50; it reads MDEKYTAKNRDKTFVVIEKRFKKNIIHRFSAKRSLFLFTPRNPIRRLAVC. The I repeat unit spans residues 41 to 342; sequence RNPIRRLAVC…VATAYELEVK (302 aa). Residues 51-70 form a helical membrane-spanning segment; it reads IATNVCFDYFLMFTIMINCV. Over 71–77 the chain is Extracellular; it reads FLAMPDI. A helical transmembrane segment spans residues 78–99; it reads SEFAEYIFLGIYTMEMAIKLVA. The Cytoplasmic segment spans residues 100–112; the sequence is GGFFIDKYTYLRD. The helical transmembrane segment at 113–134 threads the bilayer; the sequence is AWNCLDFTVIMISYITLLLQTI. Topologically, residues 135-143 are extracellular; sequence NDKVISDIT. The chain crosses the membrane as a helical; Voltage-sensor span at residues 144–167; sequence GLRTFRVLRALRTLSIIPGLKTMV. The Cytoplasmic segment spans residues 168 to 179; that stretch reads NALLRALRMLIS. A helical membrane pass occupies residues 180 to 201; sequence VLILILFCLWIFSQAGVQLFGG. The Extracellular segment spans residues 202-278; it reads ALRHKCVLQI…PNYGYTNFDS (77 aa). Cys-207 and Cys-255 are oxidised to a cystine. Residues Asn-248 and Asn-258 are each glycosylated (N-linked (GlcNAc...) asparagine). Residues 279–303 constitute an intramembrane region (pore-forming); that stretch reads IGWSMLISFQLLTQDYWEDVYNKVI. At 304–308 the chain is on the extracellular side; that stretch reads RAHSP. The chain crosses the membrane as a helical span at residues 309-331; that stretch reads WTVIYFIVINFFGSLYLMNLMLA. Residues 332–406 lie on the Cytoplasmic side of the membrane; sequence VVATAYELEV…WLRVQSFAHC (75 aa). An II repeat occupies 393 to 647; that stretch reads CYNPWLRVQS…EQEVEVSSFA (255 aa). The helical transmembrane segment at 407 to 426 threads the bilayer; it reads IITDSFTEVFIIFIIVLNTV. Residues 427-442 lie on the Extracellular side of the membrane; it reads FLAMEHHGMSMELKNV. Residues 443–464 traverse the membrane as a helical segment; the sequence is LKVANYVFTTVFVLEAILKLLA. Topologically, residues 465-472 are cytoplasmic; sequence FNKQYFKS. A helical transmembrane segment spans residues 473–491; that stretch reads GWNICDLVVVVASLIDLGV. Over 492–498 the chain is Extracellular; it reads EGLKGVS. The chain crosses the membrane as a helical; Voltage-sensor span at residues 499–522; the sequence is VFRSFRLLRVFHLAQSWTTMRLLL. Topologically, residues 523–531 are cytoplasmic; it reads CIILNTLGS. The helical transmembrane segment at 532 to 553 threads the bilayer; it reads LGYLTIILIIVIYIFAVTGLQL. Topologically, residues 554–575 are extracellular; it reads FHTEYTPDKFRGEPVPRWNFND. Positions 576 to 596 form an intramembrane region, pore-forming; that stretch reads FLHSFMMVFRILCGEWIEPMY. Over 597–607 the chain is Extracellular; that stretch reads DCMRACNGLCF. Cys-598 and Cys-606 are oxidised to a cystine. Residues 608–628 traverse the membrane as a helical segment; it reads LIFIPVTVFGKTLFFLFIGLV. Residues 629 to 777 lie on the Cytoplasmic side of the membrane; it reads LGAFGSDTVE…WNNFRRQLMM (149 aa). An III repeat occupies 770–1074; that stretch reads NFRRQLMMVC…QNYYNTLKKL (305 aa). A helical transmembrane segment spans residues 778-797; it reads VCENKYFETGVLVIIFASSI. Over 798 to 815 the chain is Extracellular; sequence LLAFEDIYLNEKPRLKLA. The chain crosses the membrane as a helical span at residues 816–837; the sequence is IFYLDITFCLLFFLEMVLKLVA. Over 838–846 the chain is Cytoplasmic; sequence LGFVHYYTH. A helical transmembrane segment spans residues 847–868; sequence FWTILDFTIVIITVISLAASGL. Topologically, residues 869–874 are extracellular; sequence GMEQIT. Residues 875–898 traverse the membrane as a helical; Voltage-sensor segment; the sequence is AFRSLRTLRALRPLRAVSRWQGMK. The Cytoplasmic segment spans residues 899–915; that stretch reads IIVNALMLSIPSIFNVL. Residues 916–937 traverse the membrane as a helical segment; that stretch reads LVCVVFWLIFAIMGVQLFAGKF. The Extracellular segment spans residues 938 to 976; sequence YKCVNETNMRIPPTEVANKIECYNKNYTWVNSNVNFDNV. N-linked (GlcNAc...) asparagine glycosylation is found at Asn-942 and Asn-963. The pore-forming intramembrane region spans 977–998; that stretch reads GGAFLALFQVATFEGWMEIMAD. Over 999 to 1009 the chain is Extracellular; it reads AVDVTEVDEQP. A helical membrane pass occupies residues 1010–1022; the sequence is KFEATVYYYFYFV. The Cytoplasmic segment spans residues 1023–1100; it reads LFIIFGSFFV…QAVVYDLVMS (78 aa). The residue at position 1076 (Thr-1076) is a Phosphothreonine; by PKC. An IV repeat occupies 1083–1386; sequence VKRPKNKCQA…WEQYDPLATQ (304 aa). A helical membrane pass occupies residues 1101–1120; that stretch reads NQFEIFITTIIITNMIFMAF. Residues 1121–1132 are Extracellular-facing; that stretch reads EHYNQSEVVTEV. An N-linked (GlcNAc...) asparagine glycan is attached at Asn-1124. Residues 1133–1154 traverse the membrane as a helical segment; it reads LATANIAFTILYAVEAIIKIIG. Over 1155–1162 the chain is Cytoplasmic; the sequence is LRIHYLRN. A helical transmembrane segment spans residues 1163-1184; that stretch reads LWNVFDFLVVTLSVMDAFLNDI. The Extracellular segment spans residues 1185-1194; sequence FGDGIFMNPS. The chain crosses the membrane as a helical; Voltage-sensor span at residues 1195 to 1218; it reads LLRVARMFRIGRIIRLIKWAKGMR. Over 1219 to 1236 the chain is Cytoplasmic; that stretch reads KLLFALVISLPALFNIGA. The helical transmembrane segment at 1237-1258 threads the bilayer; sequence LLMLVMFIYTIIGMSSFGQIKL. Over 1259-1270 the chain is Extracellular; sequence SGALNDQVNFQT. Positions 1271–1293 form an intramembrane region, pore-forming; that stretch reads FGKTFLLLVRLATSAGWNDILGP. Over 1294–1323 the chain is Extracellular; the sequence is LLIQPPNCDPNYITTSTGEKIKVVNGDCGM. A helical membrane pass occupies residues 1324-1346; it reads PWLAISYMVSYIIIVFMIVFNMY. Over 1347–1522 the chain is Cytoplasmic; the sequence is IAVILENFNQ…FIISAPETAV (176 aa).

This sequence belongs to the sodium channel (TC 1.A.1.10) family.

The protein localises to the cell membrane. Functionally, mediates the voltage-dependent sodium ion permeability of excitable membranes. Assuming opened or closed conformations in response to the voltage difference across the membrane, the protein forms a sodium-selective channel through which Na(+) ions may pass in accordance with their electrochemical gradient. In Heterololigo bleekeri (Spear squid), this protein is Sodium channel protein 1 brain.